Here is a 140-residue protein sequence, read N- to C-terminus: ATP synthase epsilon chain (140 aa).

The protein belongs to the ATPase epsilon chain family. F-type ATPases have 2 components, CF(1) - the catalytic core - and CF(0) - the membrane proton channel. CF(1) has five subunits: alpha(3), beta(3), gamma(1), delta(1), epsilon(1). CF(0) has three main subunits: a, b and c.

It localises to the cell inner membrane. Functionally, produces ATP from ADP in the presence of a proton gradient across the membrane. The sequence is that of ATP synthase epsilon chain from Colwellia psychrerythraea (strain 34H / ATCC BAA-681) (Vibrio psychroerythus).